We begin with the raw amino-acid sequence, 419 residues long: Putative competence-damage inducible protein (419 aa).

The protein belongs to the CinA family.

This is Putative competence-damage inducible protein from Streptococcus agalactiae serotype Ia (strain ATCC 27591 / A909 / CDC SS700).